The primary structure comprises 533 residues: DELLA protein GAI (533 aa).

Over residues 1-12 (MKRDHHHHHHQD) the composition is skewed to basic residues. The tract at residues 1-24 (MKRDHHHHHHQDKKTMMMNEEDDG) is disordered. The short motif at 28 to 32 (DELLA) is the DELLA motif element. Residues 50–54 (LEQLE) carry the LEXLE motif motif. Residues 73-77 (VHYNP) carry the VHYNP motif motif. The 370-residue stretch at 160 to 529 (VDSQENGVRL…RPLIATSAWK (370 aa)) folds into the GRAS domain. Residues 167–221 (VRLVHALLACAEAVQKENLTVAEALVKQIGFLAVSQIGAMRKVATYFAEALARRI) are leucine repeat I (LRI). A LxCxE motif motif is present at residues 174 to 178 (LACAE). A VHIID region spans residues 240–305 (QMHFYETCPY…GGPPVFRLTG (66 aa)). The VHIID motif lies at 271–275 (VHVID). Positions 319 to 351 (EVGCKLAHLAEAIHVEFEYRGFVANTLADLDAS) are leucine repeat II (LRII). The segment at 363-450 (VAVNSVFELH…EVYLGKQICN (88 aa)) is PFYRE. The LXXLL motif motif lies at 371 to 375 (LHKLL). Positions 453–529 (ACDGPDRVER…RPLIATSAWK (77 aa)) are SAW.

It belongs to the GRAS family. DELLA subfamily. As to quaternary structure, interacts directly with the GID2/SLY1 component of the SCF(GID2) complex. Interacts (via N-terminus) with GID1A, GID1B and GID1B (via N-terminus). Interacts with the BOI proteins BOI, BRG1, BRG2, BRG3 and NUP58. Interacts with TOPP4. Interacts with TCP14 and TCP15. Interacts with FLZ5. Binds to and coactivates GAF1/IDD2 and ENY/IDD1 at the promoter of GA20OX2 gene. Binds to PDF2 and ATML1. Interacts with the prefoldin alpha subunits PFD3 and PFD5 in the nucleus. Phosphorylated. In terms of processing, gibberellin (GA) induces dephosphorylation of GAI by TOPP4 and subsequent degradation by the proteasomal pathway. Post-translationally, may be ubiquitinated, as suggested by its interaction with GID2. Ubiquitination is however unsure since in contrast to other DELLA proteins, it is not ubiquitinated and degraded upon GA application. Nevertheless, ubiquitination may be triggered by other processes. In terms of tissue distribution, ubiquitously expressed. Expressed in rosette leaves, roots, stems and inflorescences of greenhouse grown.

Its subcellular location is the nucleus. With respect to regulation, transcription activation is repressed by gibberellic acid GA(3) in the presence of TPR4. Functionally, transcriptional regulator that acts as a repressor of the gibberellin (GA) signaling pathway. Transcription coactivator of the zinc finger transcription factors GAF1/IDD2 and ENY/IDD1 in regulation of gibberellin homeostasis and signaling. No effect of the BOI proteins on its stability. Probably acts by participating in large multiprotein complexes that repress transcription of GA-inducible genes. Positively regulates XERICO expression. In contrast to RGA, it is less sensitive to GA. Its activity is probably regulated by other phytohormones such as auxin and ethylene. Involved in the regulation of seed dormancy and germination, including glucose-induced delay of seed germination. Involved in the process leading to microtubules (MTs) dissociation in response to gibberellic acid (GA) probably by mediating the translocation of the prefoldin co-chaperone complex from the cytoplasm to the nucleus. The polypeptide is DELLA protein GAI (Arabidopsis thaliana (Mouse-ear cress)).